Consider the following 164-residue polypeptide: Axial regulator YABBY 5 (164 aa).

Residues 16–43 (CNFCNIILAVNVPCSSLFDIVTVRCGHC) form a C4-type zinc finger.

The protein belongs to the YABBY family. In terms of assembly, binds to LUG and LUH; these complexes promote adaxial cell identity in leaves as well as embryonic shoot apical meristem (SAM) initiation and postembryonic SAM maintenance. Interacts with SPL/NZZ and SPEAR2.

The protein localises to the nucleus. Its function is as follows. Promotes adaxial cell identity. Regulates the initiation of embryonic shoot apical meristem (SAM) development. The sequence is that of Axial regulator YABBY 5 (YAB5) from Arabidopsis thaliana (Mouse-ear cress).